Reading from the N-terminus, the 544-residue chain is Neurofilament light polypeptide (544 aa).

Residue S2 is modified to N-acetylserine. The interval 2-87 (SSYSYDPYYT…KIVRTQEKVQ (86 aa)) is head. The region spanning 84–394 (EKVQLQDLND…KLLEGEETRL (311 aa)) is the IF rod domain. Positions 88–119 (LQDLNDRFANFIERVHELEQRNKVLEAELLLL) are coil 1A. A linker 1 region spans residues 120 to 132 (RQKHNEPSRLRDM). Residues 133-228 (YEKEVRDVRL…KVHEEELSQL (96 aa)) form a coil 1B region. Residues 229–246 (QSQVQYAQVSLEVEVAKP) are linker 12. Residues 247–265 (DLSSALRDIRGQYEKLAAK) form a coil 2A region. A linker 2 region spans residues 266-274 (NMQSAEEWF). A coil 2B region spans residues 275-390 (KSRFTVLTQS…AAYRKLLEGE (116 aa)). The segment at 391-435 (ETRLSFSGVGAITSGYTQSAPVFGRSAYSLQSSSYMTSRAFPTYY) is tail, subdomain A. The segment at 391–544 (ETRLSFSGVG…EESEKKEKKK (154 aa)) is tail. Positions 436–544 (SSHVQEEQLD…EESEKKEKKK (109 aa)) are tail, subdomain B (acidic). The disordered stretch occupies residues 450–544 (IESSRAEEAK…EESEKKEKKK (95 aa)). Basic and acidic residues predominate over residues 451 to 462 (ESSRAEEAKAEA). Residues 463–525 (PEEEEEEAAE…EAEGDGEEEG (63 aa)) show a composition bias toward acidic residues. Residues 526-544 (ESKGDEAAEEESEKKEKKK) are compositionally biased toward basic and acidic residues.

It belongs to the intermediate filament family. In terms of assembly, forms homodimers (in vitro).

It is found in the cell projection. It localises to the axon. The protein resides in the cytoplasm. Its subcellular location is the cytoskeleton. Its function is as follows. Neurofilaments usually contain three intermediate filament proteins: NEFL, NEFM, and NEFH which are involved in the maintenance of neuronal caliber. May additionally cooperate with other neuronal intermediate filament proteins to form neuronal filamentous networks. This chain is Neurofilament light polypeptide (nefl), found in Xenopus laevis (African clawed frog).